The chain runs to 261 residues: Tryptophan synthase alpha chain (261 aa).

Active-site proton acceptor residues include Glu49 and Asp60.

Belongs to the TrpA family. Tetramer of two alpha and two beta chains.

It carries out the reaction (1S,2R)-1-C-(indol-3-yl)glycerol 3-phosphate + L-serine = D-glyceraldehyde 3-phosphate + L-tryptophan + H2O. The protein operates within amino-acid biosynthesis; L-tryptophan biosynthesis; L-tryptophan from chorismate: step 5/5. The alpha subunit is responsible for the aldol cleavage of indoleglycerol phosphate to indole and glyceraldehyde 3-phosphate. The chain is Tryptophan synthase alpha chain from Leifsonia xyli subsp. xyli (strain CTCB07).